Reading from the N-terminus, the 157-residue chain is Ubiquitin-like protein 4A (157 aa).

In terms of domain architecture, Ubiquitin-like spans 1-76 (MQLTVKALQG…LNLVVKPLEK (76 aa)). A Glycyl lysine isopeptide (Lys-Gly) (interchain with G-Cter in ubiquitin) cross-link involves residue lysine 48. Serine 90 is subject to Phosphoserine. The interval 96 to 138 (WQLISKVLARHFSAADASRVLEQLQRDYERSLSRLTLDDIERL) is required and sufficient for interaction with BAG6.

Component of the BAG6/BAT3 complex, at least composed of BAG6, UBL4A and GET4/TRC35. Interacts with BAG6; the interaction is direct and required for UBL4A protein stability. Interacts with USP13; may be indirect via BAG6. Post-translationally, polyubiquitinated. Ubiquitination by AMFR and deubiquitination by USP13 may regulate the interaction between the BAG6/BAT3 complex and SGTA and therefore may regulate client proteins fate.

Its subcellular location is the cytoplasm. It localises to the cytosol. The protein localises to the nucleus. Functionally, as part of a cytosolic protein quality control complex, the BAG6/BAT3 complex, maintains misfolded and hydrophobic patches-containing proteins in a soluble state and participates in their proper delivery to the endoplasmic reticulum or alternatively can promote their sorting to the proteasome where they undergo degradation. The BAG6/BAT3 complex is involved in the post-translational delivery of tail-anchored/type II transmembrane proteins to the endoplasmic reticulum membrane. Recruited to ribosomes, it interacts with the transmembrane region of newly synthesized tail-anchored proteins and together with SGTA and ASNA1 mediates their delivery to the endoplasmic reticulum. Client proteins that cannot be properly delivered to the endoplasmic reticulum are ubiquitinated and sorted to the proteasome. Similarly, the BAG6/BAT3 complex also functions as a sorting platform for proteins of the secretory pathway that are mislocalized to the cytosol either delivering them to the proteasome for degradation or to the endoplasmic reticulum. The BAG6/BAT3 complex also plays a role in the endoplasmic reticulum-associated degradation (ERAD), a quality control mechanism that eliminates unwanted proteins of the endoplasmic reticulum through their retrotranslocation to the cytosol and their targeting to the proteasome. It maintains these retrotranslocated proteins in an unfolded yet soluble state condition in the cytosol to ensure their proper delivery to the proteasome. The chain is Ubiquitin-like protein 4A from Homo sapiens (Human).